Reading from the N-terminus, the 425-residue chain is Polyribonucleotide 5'-hydroxyl-kinase Clp1 (425 aa).

ATP contacts are provided by residues Glu22, Lys62, and 124-129 (DVGKST).

It belongs to the Clp1 family. Clp1 subfamily. Component of the tRNA splicing endonuclease complex, composed of CLP1, TSEN2, TSEN15, TSEN34 and TSEN54. Component of pre-mRNA cleavage complex II (CF-II). Also associates with numerous components of the pre-mRNA cleavage complex I (CF-I/CFIm), including NUDT21, CPSF2, CPSF3, CPSF6 and CPSF7. Interacts with CSTF2 and SYMPK. Mg(2+) serves as cofactor. It depends on Mn(2+) as a cofactor. The cofactor is Ni(2+).

Its subcellular location is the nucleus. It catalyses the reaction a 5'-end dephospho-2'-deoxyribonucleoside-DNA + ATP = a 5'-end 5'-phospho-2'-deoxyribonucleoside-DNA + ADP + H(+). It carries out the reaction a 5'-end dephospho-ribonucleoside-RNA + ATP = a 5'-end 5'-phospho-ribonucleoside-RNA + ADP + H(+). Its function is as follows. Polynucleotide kinase that can phosphorylate the 5'-hydroxyl groups of double-stranded RNA (dsRNA), single-stranded RNA (ssRNA), double-stranded DNA (dsDNA) and double-stranded DNA:RNA hybrids. dsRNA is phosphorylated more efficiently than dsDNA, and the RNA component of a DNA:RNA hybrid is phosphorylated more efficiently than the DNA component. Plays a key role in both tRNA splicing and mRNA 3'-end formation. Component of the tRNA splicing endonuclease complex: phosphorylates the 5'-terminus of the tRNA 3'-exon during tRNA splicing; this phosphorylation event is a prerequisite for the subsequent ligation of the two exon halves and the production of a mature tRNA. Its role in tRNA splicing and maturation is required for cerebellar development. Component of the pre-mRNA cleavage complex II (CF-II), which seems to be required for mRNA 3'-end formation. Also phosphorylates the 5'-terminus of exogenously introduced short interfering RNAs (siRNAs), which is a necessary prerequisite for their incorporation into the RNA-induced silencing complex (RISC). However, endogenous siRNAs and microRNAs (miRNAs) that are produced by the cleavage of dsRNA precursors by DICER1 already contain a 5'-phosphate group, so this protein may be dispensible for normal RNA-mediated gene silencing. The polypeptide is Polyribonucleotide 5'-hydroxyl-kinase Clp1 (Bos taurus (Bovine)).